The primary structure comprises 175 residues: Ribosome maturation factor RimM (175 aa).

In terms of domain architecture, PRC barrel spans 95 to 175 (EEGDYYWHDL…TITVDWDAGF (81 aa)).

It belongs to the RimM family. As to quaternary structure, binds ribosomal protein uS19.

It localises to the cytoplasm. Functionally, an accessory protein needed during the final step in the assembly of 30S ribosomal subunit, possibly for assembly of the head region. Essential for efficient processing of 16S rRNA. May be needed both before and after RbfA during the maturation of 16S rRNA. It has affinity for free ribosomal 30S subunits but not for 70S ribosomes. The sequence is that of Ribosome maturation factor RimM from Glaesserella parasuis serovar 5 (strain SH0165) (Haemophilus parasuis).